Consider the following 359-residue polypeptide: uncharacterized protein (359 aa).

This sequence belongs to the glycosyltransferase group 1 family. Glycosyltransferase 4 subfamily.

This is an uncharacterized protein from Bacillus subtilis (strain 168).